We begin with the raw amino-acid sequence, 752 residues long: Palmitoyltransferase AKR1 (752 aa).

2 disordered regions span residues 1–21 and 49–68; these read MTAEEVDKESDPAIEDVKSDY and ASSELKHENDQGEERDLGSV. Topologically, residues 1–318 are cytoplasmic; the sequence is MTAEEVDKES…FPLPQYFSAS (318 aa). Basic and acidic residues-rich tracts occupy residues 9 to 21 and 51 to 68; these read ESDPAIEDVKSDY and SELKHENDQGEERDLGSV. 6 ANK repeats span residues 72 to 102, 108 to 137, 142 to 171, 175 to 208, 212 to 241, and 245 to 274; these read PILERYHAACKQGDMKTLREMVESKVIDLSN, ERVSGLHWACINNRLSAVKYLAGAGAEVNF, LDATPLHWASKSGLVYIVDELLKAGADPNI, QGYNLLHTSVFSSNIMLVIYVLFFVVDGKEDVDQ, HQRTALQWATYQADALTVENLLKFNADVKN, and AGFTALHWGTVKGSIPVMDLLIKHGSDFFQ. A helical transmembrane segment spans residues 319-339; that stretch reads TGKMLTFFLPWVLIPLVFYIF. At 340–341 the chain is on the lumenal side; that stretch reads SK. Residues 342–362 traverse the membrane as a helical segment; it reads ITFFIALLINTIVLVISGLVL. Over 363-380 the chain is Cytoplasmic; the sequence is SRLVVPSYLLSKRHPILN. A helical membrane pass occupies residues 381-401; the sequence is SPLLAGILSGTIAIAFFIWFT. Over 402-412 the chain is Lumenal; the sequence is KISILTFTEKP. A helical transmembrane segment spans residues 413 to 433; it reads VGNIIMLGFFIGLITLFIGLM. Over 434 to 509 the chain is Cytoplasmic; that stretch reads KSDPGYIPGT…YNQIGLLNHK (76 aa). Positions 466–516 constitute a DHHC domain; that stretch reads HFCVHTWIRIPLRSKYDRDSACLISAFDHFCPWVYNQIGLLNHKLFYMFVV. C496 acts as the S-palmitoyl cysteine intermediate in catalysis. A helical membrane pass occupies residues 510-530; the sequence is LFYMFVVLLEISVWWFLPLMM. Over 531–567 the chain is Lumenal; sequence EYFDELEDYLENRKGKHFGDCHFLGDEDLCFGLHHDT. The chain crosses the membrane as a helical span at residues 568-588; it reads FNFLLLCWVIFQAFWVLCLIA. Topologically, residues 589–752 are cytoplasmic; it reads VQTVQMLKGV…TLPNATEELV (164 aa).

It belongs to the DHHC palmitoyltransferase family. AKR/ZDHHC17 subfamily.

It localises to the early endosome membrane. The protein resides in the golgi apparatus membrane. It catalyses the reaction L-cysteinyl-[protein] + hexadecanoyl-CoA = S-hexadecanoyl-L-cysteinyl-[protein] + CoA. Its function is as follows. Palmitoyltransferase specific for casein kinase 1. This chain is Palmitoyltransferase AKR1 (AKR1), found in Kluyveromyces lactis (strain ATCC 8585 / CBS 2359 / DSM 70799 / NBRC 1267 / NRRL Y-1140 / WM37) (Yeast).